We begin with the raw amino-acid sequence, 110 residues long: Large ribosomal subunit protein uL24 (110 aa).

The protein belongs to the universal ribosomal protein uL24 family. In terms of assembly, part of the 50S ribosomal subunit.

In terms of biological role, one of two assembly initiator proteins, it binds directly to the 5'-end of the 23S rRNA, where it nucleates assembly of the 50S subunit. Functionally, one of the proteins that surrounds the polypeptide exit tunnel on the outside of the subunit. The polypeptide is Large ribosomal subunit protein uL24 (Roseiflexus castenholzii (strain DSM 13941 / HLO8)).